The primary structure comprises 212 residues: Guanylate kinase (212 aa).

One can recognise a Guanylate kinase-like domain in the interval 5–187 (GILCIISAPS…ALMHLQSIML (183 aa)). 12-19 (APSGTGKS) lines the ATP pocket.

The protein belongs to the guanylate kinase family.

It localises to the cytoplasm. The enzyme catalyses GMP + ATP = GDP + ADP. Functionally, essential for recycling GMP and indirectly, cGMP. The chain is Guanylate kinase from Blochmanniella pennsylvanica (strain BPEN).